We begin with the raw amino-acid sequence, 474 residues long: MASVSSSPSYSSQAAVLLLLHQPPHQHGHGGACLRYRGSQSQGRGNAVATSLGLSAAGRGGAGGLLLLPPLPALRAAEGKDGRAVTKDEEEEAAAAAVEEEGEVEVRREEDKPGDDGSREAAARGSGSGRFSADYISLGIREPVYEVIEVKSNGRMSTKKISRRQLLKSSGLRLRDTRSVDPSLWLMNSMPSLLVREQAILVNLGSLRAIAMHERVLIFNYNSPGGKAFLDSLLPRLNPRNINGGPAMPFQLEVVEAALLSRIQRLERRLMRIEPRVGALLEVLPNRLTADVLEQLRLSKQALVELGSRAGDLKQMLIDLLDDPHEIRRICIMGRNCTLDKLSDNMECSVPLEKQIAEEEEEEIEMLLENYLQRCESIHGQAERLLDSAREMEDSIAVNLSSRRLEVSRVELLLQVGTFCVAIGALIAGIFGMNLKSYLETNAWAFWATTGGIVVGAVAGFFIMYSYLKTRKIL.

A chloroplast-targeting transit peptide spans 1–55; the sequence is MASVSSSPSYSSQAAVLLLLHQPPHQHGHGGACLRYRGSQSQGRGNAVATSLGLS. The segment at 79 to 129 is disordered; the sequence is GKDGRAVTKDEEEEAAAAAVEEEGEVEVRREEDKPGDDGSREAAARGSGSG. Over residues 88 to 103 the composition is skewed to acidic residues; sequence DEEEEAAAAAVEEEGE. Residues 104–122 show a composition bias toward basic and acidic residues; sequence VEVRREEDKPGDDGSREAA. The next 2 helical transmembrane spans lie at 412 to 432 and 444 to 464; these read LLLQ…GIFG and WAFW…FFIM. Residues 432–434 carry the Required for magnesium transport activity motif; sequence GMN.

Belongs to the CorA metal ion transporter (MIT) (TC 1.A.35.5) family.

The protein resides in the plastid. Its subcellular location is the chloroplast membrane. Functionally, magnesium transporter that may mediate the influx of magnesium in chloroplast. The sequence is that of Magnesium transporter MRS2-A, chloroplastic (MRS2-A) from Oryza sativa subsp. japonica (Rice).